A 79-amino-acid polypeptide reads, in one-letter code: U-actitoxin-Avd8b (79 aa).

Residues 1-19 (MKSLVIVFVVLLGVAMISA) form the signal peptide. A propeptide spanning residues 20–36 (NEEELLAILQDQRNDAR) is cleaved from the precursor.

It belongs to the sea anemone 8 toxin family.

It is found in the secreted. Its subcellular location is the nematocyst. The polypeptide is U-actitoxin-Avd8b (Anemonia viridis (Snakelocks anemone)).